Reading from the N-terminus, the 532-residue chain is 5-methylcytosine-modifying enzyme 1 (532 aa).

335–337 contributes to the L-ascorbate binding site; it reads SLT. 3 residues coordinate Fe cation: His345, Asp347, and His397. Position 397-399 (397-399) interacts with L-ascorbate; it reads HGT.

The protein belongs to the TET family. Fe(2+) is required as a cofactor.

The protein resides in the nucleus. It carries out the reaction a 5-methyl-2'-deoxycytidine in DNA + L-ascorbate + O2 = a (8S,9S)-5-glyceryl-2'-deoxycytidine in DNA + glyoxylate + CO2. It catalyses the reaction a 5-methyl-2'-deoxycytidine in DNA + L-ascorbate + O2 = a (8S,9R)-5-glyceryl-2'-deoxycytidine in DNA + glyoxylate + CO2. Functionally, dioxygenase that catalyzes DNA modification by mediating the conversion of the modified genomic base 5-methylcytosine (5mC) into 5-glyceryl-methylcytosine (5gmC). Catalyzes the conjugation of a glyceryl moiety from L-ascorbate (vitamin C) to the methyl group of 5mC through a carbon-carbon bond. 5gmC DNA modification may be required during photosynthesis as an epigenetic mark that couteracts DNA methylation. The sequence is that of 5-methylcytosine-modifying enzyme 1 from Chlamydomonas reinhardtii (Chlamydomonas smithii).